Reading from the N-terminus, the 185-residue chain is Ribosome-recycling factor (185 aa).

This sequence belongs to the RRF family.

The protein resides in the cytoplasm. Its function is as follows. Responsible for the release of ribosomes from messenger RNA at the termination of protein biosynthesis. May increase the efficiency of translation by recycling ribosomes from one round of translation to another. This chain is Ribosome-recycling factor, found in Corynebacterium kroppenstedtii (strain DSM 44385 / JCM 11950 / CIP 105744 / CCUG 35717).